The following is a 199-amino-acid chain: dITP/XTP pyrophosphatase (199 aa).

A substrate-binding site is contributed by 9–14 (TGNKGK). 2 residues coordinate Mg(2+): E41 and D70. D70 serves as the catalytic Proton acceptor. Substrate contacts are provided by residues S71, 157-160 (FGYD), K180, and 185-186 (HR).

It belongs to the HAM1 NTPase family. In terms of assembly, homodimer. The cofactor is Mg(2+).

The enzyme catalyses XTP + H2O = XMP + diphosphate + H(+). It carries out the reaction dITP + H2O = dIMP + diphosphate + H(+). It catalyses the reaction ITP + H2O = IMP + diphosphate + H(+). In terms of biological role, pyrophosphatase that catalyzes the hydrolysis of nucleoside triphosphates to their monophosphate derivatives, with a high preference for the non-canonical purine nucleotides XTP (xanthosine triphosphate), dITP (deoxyinosine triphosphate) and ITP. Seems to function as a house-cleaning enzyme that removes non-canonical purine nucleotides from the nucleotide pool, thus preventing their incorporation into DNA/RNA and avoiding chromosomal lesions. In Mannheimia succiniciproducens (strain KCTC 0769BP / MBEL55E), this protein is dITP/XTP pyrophosphatase.